The sequence spans 317 residues: MKKLTSNDVTPEEIFYQRRKIIKAFGLSAVATALPTFSFAQESSDLKALEYKKSTESTLILTPENKVTGYNNFYEFGVDKGSPAHYAKKFQVNPWKLEIGGEVENPFTLNYDQLFTQFPLEERIYRFRCVEAWAMVVPWIGFELNKLLEKAKPTSKAKYVVFHTLYDPEQMPGQKNHFFGGGIHYPYVEALTLAEAMHSLTLMSVGLYGKALAPQNGAPIRLVVPWKYGFKSIKSIVKITLSETRPRTTWESLAPNEYGFYANVNPKVDHPRWSQASERVIGAGGLLRVKRQPTLMFNGYEREVAHLYKGLDLRINY.

Residues 1–40 (MKKLTSNDVTPEEIFYQRRKIIKAFGLSAVATALPTFSFA) constitute a signal peptide (tat-type signal). Mo-molybdopterin contacts are provided by residues N71, 74–75 (YE), C129, T164, N216, R221, and 232–234 (SIK).

It belongs to the MsrP family. In terms of assembly, heterodimer of a catalytic subunit (MsrP) and a heme-binding subunit (MsrQ). Mo-molybdopterin is required as a cofactor. Post-translationally, predicted to be exported by the Tat system. The position of the signal peptide cleavage has not been experimentally proven.

The protein resides in the periplasm. The catalysed reaction is L-methionyl-[protein] + a quinone + H2O = L-methionyl-(S)-S-oxide-[protein] + a quinol. It catalyses the reaction L-methionyl-[protein] + a quinone + H2O = L-methionyl-(R)-S-oxide-[protein] + a quinol. Part of the MsrPQ system that repairs oxidized periplasmic proteins containing methionine sulfoxide residues (Met-O), using respiratory chain electrons. Thus protects these proteins from oxidative-stress damage caused by reactive species of oxygen and chlorine generated by the host defense mechanisms. MsrPQ is essential for the maintenance of envelope integrity under bleach stress, rescuing a wide series of structurally unrelated periplasmic proteins from methionine oxidation. The catalytic subunit MsrP is non-stereospecific, being able to reduce both (R-) and (S-) diastereoisomers of methionine sulfoxide. This Histophilus somni (strain 2336) (Haemophilus somnus) protein is Protein-methionine-sulfoxide reductase catalytic subunit MsrP.